The sequence spans 461 residues: UDP-N-acetylmuramate--L-alanine ligase (461 aa).

111–117 (GAHGKTT) contributes to the ATP binding site.

This sequence belongs to the MurCDEF family.

The protein localises to the cytoplasm. It catalyses the reaction UDP-N-acetyl-alpha-D-muramate + L-alanine + ATP = UDP-N-acetyl-alpha-D-muramoyl-L-alanine + ADP + phosphate + H(+). It participates in cell wall biogenesis; peptidoglycan biosynthesis. Functionally, cell wall formation. The polypeptide is UDP-N-acetylmuramate--L-alanine ligase (Pelotomaculum thermopropionicum (strain DSM 13744 / JCM 10971 / SI)).